The following is a 43-amino-acid chain: MTTKFVFDLLAPDDILHPSNHVNLIIRLIEVEHIIIATTMPAV.

The protein belongs to the coronaviruses ns4.9 protein family.

In Bos taurus (Bovine), this protein is Non-structural protein of 4.9 kDa.